The primary structure comprises 417 residues: Secernin-3 (417 aa).

Residues 1–5 (MYPRS) constitute a propeptide that is removed on maturation. Cys-6 is an active-site residue. Cys-6 carries the post-translational modification Glyoxylic acid (Cys); alternate. Position 6 is a pyruvic acid (Cys); alternate (Cys-6).

The protein belongs to the peptidase C69 family. Secernin subfamily.

Plays a role in thermal nociception. This is Secernin-3 (scrn3) from Danio rerio (Zebrafish).